A 238-amino-acid polypeptide reads, in one-letter code: Ubiquinone biosynthesis O-methyltransferase (238 aa).

R36, G56, D77, and M125 together coordinate S-adenosyl-L-methionine.

The protein belongs to the methyltransferase superfamily. UbiG/COQ3 family.

It catalyses the reaction a 3-demethylubiquinol + S-adenosyl-L-methionine = a ubiquinol + S-adenosyl-L-homocysteine + H(+). It carries out the reaction a 3-(all-trans-polyprenyl)benzene-1,2-diol + S-adenosyl-L-methionine = a 2-methoxy-6-(all-trans-polyprenyl)phenol + S-adenosyl-L-homocysteine + H(+). It participates in cofactor biosynthesis; ubiquinone biosynthesis. In terms of biological role, O-methyltransferase that catalyzes the 2 O-methylation steps in the ubiquinone biosynthetic pathway. This Histophilus somni (strain 2336) (Haemophilus somnus) protein is Ubiquinone biosynthesis O-methyltransferase.